Reading from the N-terminus, the 200-residue chain is Methylthioribulose-1-phosphate dehydratase (200 aa).

2 residues coordinate Zn(2+): His-90 and His-92.

This sequence belongs to the aldolase class II family. MtnB subfamily. Zn(2+) is required as a cofactor.

The enzyme catalyses 5-(methylsulfanyl)-D-ribulose 1-phosphate = 5-methylsulfanyl-2,3-dioxopentyl phosphate + H2O. Its pathway is amino-acid biosynthesis; L-methionine biosynthesis via salvage pathway; L-methionine from S-methyl-5-thio-alpha-D-ribose 1-phosphate: step 2/6. Functionally, catalyzes the dehydration of methylthioribulose-1-phosphate (MTRu-1-P) into 2,3-diketo-5-methylthiopentyl-1-phosphate (DK-MTP-1-P). This is Methylthioribulose-1-phosphate dehydratase from Sodalis glossinidius (strain morsitans).